The primary structure comprises 587 residues: Bifunctional dihydrofolate reductase-thymidylate synthase (587 aa).

One can recognise a DHFR domain in the interval 9-237; the sequence is DIYAICACCK…TTLDFIIYSK (229 aa). 36-42 contacts NADP(+); sequence GIGNAGV. A substrate-binding site is contributed by aspartate 51. Residues 108 to 110 and 129 to 132 each bind NADP(+); these read KKS and LSRT. 3 residues coordinate substrate: isoleucine 173, tyrosine 179, and threonine 194. 174 to 181 serves as a coordination point for NADP(+); it reads GGSSVYKE. Residues 301–587 are thymidylate synthase; it reads NHPEYQYLNI…HDKINMDMAA (287 aa). Arginine 324 contacts dUMP. Cysteine 469 is a catalytic residue. DUMP contacts are provided by residues histidine 470, 488-492, asparagine 500, and 530-532; these read QRSCD and HVY.

This sequence in the N-terminal section; belongs to the dihydrofolate reductase family. The protein in the C-terminal section; belongs to the thymidylate synthase family. In terms of assembly, homodimer.

The enzyme catalyses (6S)-5,6,7,8-tetrahydrofolate + NADP(+) = 7,8-dihydrofolate + NADPH + H(+). It catalyses the reaction dUMP + (6R)-5,10-methylene-5,6,7,8-tetrahydrofolate = 7,8-dihydrofolate + dTMP. It functions in the pathway cofactor biosynthesis; tetrahydrofolate biosynthesis; 5,6,7,8-tetrahydrofolate from 7,8-dihydrofolate: step 1/1. Functionally, bifunctional enzyme. Involved in de novo dTMP biosynthesis. Key enzyme in folate metabolism. Catalyzes an essential reaction for de novo glycine and purine synthesis, DNA precursor synthesis, and for the conversion of dUMP to dTMP. The protein is Bifunctional dihydrofolate reductase-thymidylate synthase of Plasmodium berghei (strain Anka).